The following is a 153-amino-acid chain: Cell division protein SepF (153 aa).

This sequence belongs to the SepF family. As to quaternary structure, homodimer. Interacts with FtsZ.

It localises to the cytoplasm. Cell division protein that is part of the divisome complex and is recruited early to the Z-ring. Probably stimulates Z-ring formation, perhaps through the cross-linking of FtsZ protofilaments. Its function overlaps with FtsA. This Clostridium tetani (strain Massachusetts / E88) protein is Cell division protein SepF.